A 539-amino-acid polypeptide reads, in one-letter code: Polyol transporter 5 (539 aa).

Residues 1-11 show a composition bias toward polar residues; the sequence is MTGATPENRTA. The interval 1–24 is disordered; it reads MTGATPENRTAPSPPPVKHVPESV. 12 consecutive transmembrane segments (helical) span residues 37 to 57, 73 to 93, 104 to 124, 127 to 147, 165 to 185, 196 to 216, 296 to 316, 333 to 353, 364 to 384, 391 to 411, 433 to 453, and 463 to 483; these read FACA…IGVM, LQIG…SCAA, YTIV…GLSP, AFLM…LMIA, SFPE…NLAF, LMLG…LAMP, IAAI…VVLF, LLAT…ATFL, LTSV…LTII, VMWA…TFSI, GSSM…ISFL, and GAFY…YTFL. Composition is skewed to basic and acidic residues over residues 503-514 and 530-539; these read WRDSKSKPKGNP and QWKEGDTQSS. The tract at residues 503–539 is disordered; sequence WRDSKSKPKGNPEKTVPNPEVEIGSNKQWKEGDTQSS.

This sequence belongs to the major facilitator superfamily. Sugar transporter (TC 2.A.1.1) family. In terms of tissue distribution, highly expressed in roots. Expressed in vascular tissue of leaves, sepals and siliques.

The protein localises to the cell membrane. Plasma membrane broad-spectrum sugar-proton symporter. Mediates the uptake of linear polyols such as sorbitol, xylitol, erythritol or glycerol. Can transport the cyclic polyol myo-inositol and different hexoses, pentoses (including ribose), tetroses and sugar alcohols. This chain is Polyol transporter 5 (PLT5), found in Arabidopsis thaliana (Mouse-ear cress).